Consider the following 435-residue polypeptide: Enolase (435 aa).

A (2R)-2-phosphoglycerate-binding site is contributed by Gln-163. The active-site Proton donor is the Glu-205. The Mg(2+) site is built by Asp-243, Glu-292, and Asp-319. Residues Lys-344, Arg-373, Ser-374, and Lys-395 each contribute to the (2R)-2-phosphoglycerate site. Lys-344 serves as the catalytic Proton acceptor.

The protein belongs to the enolase family. It depends on Mg(2+) as a cofactor.

The protein resides in the cytoplasm. It localises to the secreted. Its subcellular location is the cell surface. It carries out the reaction (2R)-2-phosphoglycerate = phosphoenolpyruvate + H2O. The protein operates within carbohydrate degradation; glycolysis; pyruvate from D-glyceraldehyde 3-phosphate: step 4/5. In terms of biological role, catalyzes the reversible conversion of 2-phosphoglycerate (2-PG) into phosphoenolpyruvate (PEP). It is essential for the degradation of carbohydrates via glycolysis. In Streptococcus equi subsp. zooepidemicus (strain MGCS10565), this protein is Enolase.